A 301-amino-acid chain; its full sequence is Heterogeneous nuclear ribonucleoprotein D-like (301 aa).

2 consecutive RRM domains span residues 29–111 (GKMF…KGKE) and 114–193 (KKVF…QPKE). Residue Lys-42 is modified to N6-methyllysine. A Glycyl lysine isopeptide (Lys-Gly) (interchain with G-Cter in SUMO2) cross-link involves residue Lys-90. Lys-97 bears the N6-acetyllysine mark. Ser-122 bears the Phosphoserine mark. 2 disordered regions span residues 194–229 (VYRQ…NWNQ) and 279–301 (GQQS…YQPY). A compositionally biased stretch (gly residues) spans 204–223 (GGRGAAAGGRGGARGRGRGQ). Residues 223–301 (QGQNWNQGFN…GNHQNNYQPY (79 aa)) form a necessary for interaction with TNPO1 region. Position 289 is a dimethylated arginine; alternate (Arg-289). At Arg-289 the chain carries Omega-N-methylarginine; alternate.

In terms of assembly, interacts with TNPO1. Interacts with ZNF148. Post-translationally, dimethylation of Arg-289 is probably of the asymmetric type. As to expression, expressed in skeletal muscle, myoblast, myotube, heart, brain, liver, kidney, heart, lung, stomach, small intestine, large intestine, spleen, and testis (at protein level). Expressed in brain, skeletal muscle, heart, lung, liver, stomach, small intestine, large intestine, kidney, spleen and testis.

The protein localises to the nucleus. It localises to the cytoplasm. Acts as a transcriptional regulator. Promotes transcription repression. Promotes transcription activation in differentiated myotubes. Binds to double- and single-stranded DNA sequences. Binds to the transcription suppressor CATR sequence of the COX5B promoter. Binds with high affinity to RNA molecules that contain AU-rich elements (AREs) found within the 3'-UTR of many proto-oncogenes and cytokine mRNAs. Binds both to nuclear and cytoplasmic poly(A) mRNAs. Binds to poly(G) and poly(A), but not to poly(U) or poly(C) RNA homopolymers. Binds to the 5'-ACUAGC-3' RNA consensus sequence. In Mus musculus (Mouse), this protein is Heterogeneous nuclear ribonucleoprotein D-like (Hnrnpdl).